Consider the following 134-residue polypeptide: Large ribosomal subunit protein bL17 (134 aa).

Belongs to the bacterial ribosomal protein bL17 family. Part of the 50S ribosomal subunit. Contacts protein L32.

This chain is Large ribosomal subunit protein bL17, found in Thioalkalivibrio sulfidiphilus (strain HL-EbGR7).